A 707-amino-acid polypeptide reads, in one-letter code: Drebrin (707 aa).

N-acetylalanine is present on alanine 2. Residues glycine 3–serine 134 enclose the ADF-H domain. Phosphoserine occurs at positions 141 and 142. Positions glutamate 209–arginine 236 are enriched in basic and acidic residues. Disordered regions lie at residues glutamate 209 to glutamate 438, alanine 452 to alanine 497, tryptophan 531 to serine 557, leucine 582 to alanine 609, and leucine 630 to aspartate 707. Phosphoserine is present on serine 241. Positions aspartate 288 to glutamate 298 are enriched in basic and acidic residues. Over residues serine 329–proline 343 the composition is skewed to low complexity. A Phosphoserine modification is found at serine 342. Residues arginine 355 to proline 364 show a composition bias toward polar residues. Phosphothreonine is present on residues threonine 377 and threonine 381. Residues proline 380–threonine 395 show a composition bias toward polar residues. Phosphoserine occurs at positions 383, 385, and 391. The residue at position 392 (threonine 392) is a Phosphothreonine. Over residues glutamine 409–alanine 420 the composition is skewed to pro residues. Basic and acidic residues predominate over residues proline 428 to glutamate 438. Serine 467 bears the Phosphoserine mark. Phosphothreonine is present on threonine 549. The span at asparagine 639–serine 652 shows a compositional bias: polar residues. Residue serine 659 is modified to Phosphoserine. Residues proline 695–aspartate 707 are compositionally biased toward acidic residues.

As to quaternary structure, interacts with RUFY. Interacts with CXCR4; this interaction is enhanced by antigenic stimulation. Interacts (via ADF-H domain) with ZMYND8 (via N-terminus); the interaction leads to sequestering of ZMYND8 in the cytoplasm. ISGylated. As to expression, brain neurons.

It localises to the cytoplasm. The protein localises to the cell projection. Its subcellular location is the dendrite. The protein resides in the cell cortex. It is found in the cell junction. It localises to the growth cone. Actin cytoskeleton-organizing protein that plays a role in the formation of cell projections. Required for actin polymerization at immunological synapses (IS) and for the recruitment of the chemokine receptor CXCR4 to IS. Plays a role in dendritic spine morphogenesis and organization, including the localization of the dopamine receptor DRD1 to the dendritic spines. Involved in memory-related synaptic plasticity in the hippocampus. The protein is Drebrin (Dbn1) of Rattus norvegicus (Rat).